The primary structure comprises 407 residues: MSTAPSQQHASAQVPDPRGRFGDFGGRFVPETLTRALDELSEEYEKAKRDPEFQRELDGLLKTFVGRPSPLYHAKRLSSAVGGAQIWLKREDLNHTGAHKINNTIGQALLTLRMGKTRVIAETGAGQHGVASATACAHFGLPCTVYMGAEDIRRQKPNVFSMKLLGANISAVESGSRTLRDAVNEAMRDWMSSVEDTHYIIGSVIGPHPFPMMVRDFQSVIGRETREQCRDTFGRLPDCVVACVGGGSNAAGMFYPFVEDEGVRMVGVEAGGRSATPGDHASPLSYGNPGVLHGSYSYVMQDEDGQTCDVHSMSAGLDYPGVGPEHSYWKDTKRVDYIDCRDDEALTAFERLASSEGILAALETSHAVAKAIEIAGKMSDQEHLVICLSGRGDKDSMEIARLRGEEW.

The segment covering 1 to 11 (MSTAPSQQHAS) has biased composition (polar residues). A disordered region spans residues 1-25 (MSTAPSQQHASAQVPDPRGRFGDFG). The residue at position 100 (Lys-100) is an N6-(pyridoxal phosphate)lysine.

It belongs to the TrpB family. Tetramer of two alpha and two beta chains. It depends on pyridoxal 5'-phosphate as a cofactor.

It carries out the reaction (1S,2R)-1-C-(indol-3-yl)glycerol 3-phosphate + L-serine = D-glyceraldehyde 3-phosphate + L-tryptophan + H2O. It participates in amino-acid biosynthesis; L-tryptophan biosynthesis; L-tryptophan from chorismate: step 5/5. Its function is as follows. The beta subunit is responsible for the synthesis of L-tryptophan from indole and L-serine. The polypeptide is Tryptophan synthase beta chain (Rhodopirellula baltica (strain DSM 10527 / NCIMB 13988 / SH1)).